A 329-amino-acid polypeptide reads, in one-letter code: Oligopeptide transport ATP-binding protein AppF (329 aa).

The region spanning 10 to 261 is the ABC transporter domain; the sequence is LELRDVKKYF…PLHPYTQALL (252 aa). 53–60 lines the ATP pocket; the sequence is GESGCGKS.

This sequence belongs to the ABC transporter superfamily.

The protein localises to the cell membrane. This protein is a component of an oligopeptide permease, a binding protein-dependent transport system. This APP system can completely substitute for the OPP system in both sporulation and genetic competence, though, unlike OPP, is incapable of transporting tripeptides. Probably responsible for energy coupling to the transport system. The chain is Oligopeptide transport ATP-binding protein AppF (appF) from Bacillus subtilis (strain 168).